Reading from the N-terminus, the 933-residue chain is Neuronal PAS domain-containing protein 4A (933 aa).

The basic motif; degenerate stretch occupies residues 1–13 (MYRSTKGASKARR). Residues 1-53 (MYRSTKGASKARRDQINAEIRNLKDLLPISDADKSRLSYLHIMSLACMYTRKS) form the bHLH domain. A helix-loop-helix motif region spans residues 14-53 (DQINAEIRNLKDLLPISDADKSRLSYLHIMSLACMYTRKS). PAS domains lie at 74–148 (SFYE…PDTD) and 220–290 (TSAS…LREG). A PAC domain is found at 295-334 (AEMVVRVETADHSWVWLYMVLQLETGETPIVSNNYIISET). Polar residues predominate over residues 361–398 (QESVSLQSPETLSSPDQVFTPGSSGLSGQSFDFSTAAC). 3 disordered regions span residues 361-451 (QESV…ASSP), 514-573 (GSNF…LSSL), and 750-776 (DLSSSPPLSPTPSSSSHSSPPSSPSTP). Composition is skewed to low complexity over residues 399-411 (STGSTEEQGGSSS), 440-451 (EPMASPSSASSP), 538-560 (GQTATVTTTTAPSLSPSAPSNPQ), and 751-769 (LSSSPPLSPTPSSSSHSSP).

In terms of assembly, efficient DNA binding requires dimerization with another bHLH protein. Brain-specific.

Its subcellular location is the nucleus. Functionally, transcription factor expressed in neurons of the brain that regulates the excitatory-inhibitory balance within neural circuits and is required for contextual memory in the hippocampus. Plays a key role in the structural and functional plasticity of neurons. Acts as an early-response transcription factor in both excitatory and inhibitory neurons, where it induces distinct but overlapping sets of late-response genes in these two types of neurons, allowing the synapses that form on inhibitory and excitatory neurons to be modified by neuronal activity in a manner specific to their function within a circuit, thereby facilitating appropriate circuit responses to sensory experience. This chain is Neuronal PAS domain-containing protein 4A (npas4a), found in Danio rerio (Zebrafish).